The chain runs to 1529 residues: ATP-dependent permease PDR15 (1529 aa).

The segment covering Met-1–Ser-13 has biased composition (basic and acidic residues). The tract at residues Met-1–Asp-38 is disordered. The Cytoplasmic segment spans residues Met-1–Ser-531. The span at Arg-14–Ser-24 shows a compositional bias: low complexity. Residues Leu-171–Pro-420 form the ABC transporter 1 domain. Residues Val-532–Tyr-552 traverse the membrane as a helical segment. Residues Lys-553 to Gly-567 are Extracellular-facing. The N-linked (GlcNAc...) asparagine glycan is linked to Asn-558. A helical membrane pass occupies residues Ala-568–Leu-588. Residues Tyr-589–Glu-617 are Cytoplasmic-facing. Residues Met-618–Phe-638 traverse the membrane as a helical segment. The Extracellular segment spans residues Arg-639–Gly-642. Residues Gly-643 to Phe-663 traverse the membrane as a helical segment. Residues Arg-664–Lys-699 lie on the Cytoplasmic side of the membrane. Residues Ile-700–Leu-720 form a helical membrane-spanning segment. Over Met-721–Arg-783 the chain is Extracellular. A glycan (N-linked (GlcNAc...) asparagine) is linked at Asn-744. A helical transmembrane segment spans residues Gly-784–Glu-804. The Cytoplasmic portion of the chain corresponds to Tyr-805–Asp-1219. The segment covering Glu-829–Asp-840 has biased composition (basic and acidic residues). The disordered stretch occupies residues Glu-829 to Ala-873. In terms of domain architecture, ABC transporter 2 spans Phe-884–Ala-1127. Residue Gly-920–Thr-927 participates in ATP binding. The chain crosses the membrane as a helical span at residues Tyr-1220–Phe-1240. Residues Lys-1241–Gly-1312 lie on the Extracellular side of the membrane. Residues Thr-1313 to Gly-1333 traverse the membrane as a helical segment. Topologically, residues Gln-1334–Ala-1340 are cytoplasmic. A helical transmembrane segment spans residues Leu-1341–Ile-1361. At Ser-1362–Glu-1368 the chain is on the extracellular side. The chain crosses the membrane as a helical span at residues Thr-1369–Ala-1389. Over Thr-1390–Arg-1396 the chain is Cytoplasmic. A helical membrane pass occupies residues Phe-1397–Leu-1417. At Gly-1418–Asn-1492 the chain is on the extracellular side. The helical transmembrane segment at Tyr-1493–Leu-1513 threads the bilayer. The Cytoplasmic portion of the chain corresponds to Ser-1514–Lys-1529.

The protein belongs to the ABC transporter superfamily. ABCG family. PDR (TC 3.A.1.205) subfamily.

The protein localises to the membrane. This chain is ATP-dependent permease PDR15 (PDR15), found in Saccharomyces cerevisiae (strain ATCC 204508 / S288c) (Baker's yeast).